The primary structure comprises 434 residues: Glutamate-1-semialdehyde 2,1-aminomutase 1 (434 aa).

Lys-268 carries the post-translational modification N6-(pyridoxal phosphate)lysine.

It belongs to the class-III pyridoxal-phosphate-dependent aminotransferase family. HemL subfamily. As to quaternary structure, homodimer. Pyridoxal 5'-phosphate serves as cofactor.

It localises to the cytoplasm. It catalyses the reaction (S)-4-amino-5-oxopentanoate = 5-aminolevulinate. The protein operates within porphyrin-containing compound metabolism; protoporphyrin-IX biosynthesis; 5-aminolevulinate from L-glutamyl-tRNA(Glu): step 2/2. The sequence is that of Glutamate-1-semialdehyde 2,1-aminomutase 1 from Shouchella clausii (strain KSM-K16) (Alkalihalobacillus clausii).